The chain runs to 217 residues: Orotate phosphoribosyltransferase (217 aa).

Lysine 26 provides a ligand contact to 5-phospho-alpha-D-ribose 1-diphosphate. 34 to 35 (FF) serves as a coordination point for orotate. Residues 72–73 (YK), arginine 99, lysine 100, lysine 103, histidine 105, and 124–132 (DDVITAGTA) each bind 5-phospho-alpha-D-ribose 1-diphosphate. The orotate site is built by threonine 128 and arginine 156.

This sequence belongs to the purine/pyrimidine phosphoribosyltransferase family. PyrE subfamily. Homodimer. Mg(2+) serves as cofactor.

It catalyses the reaction orotidine 5'-phosphate + diphosphate = orotate + 5-phospho-alpha-D-ribose 1-diphosphate. It participates in pyrimidine metabolism; UMP biosynthesis via de novo pathway; UMP from orotate: step 1/2. Its function is as follows. Catalyzes the transfer of a ribosyl phosphate group from 5-phosphoribose 1-diphosphate to orotate, leading to the formation of orotidine monophosphate (OMP). In Aeromonas salmonicida (strain A449), this protein is Orotate phosphoribosyltransferase.